The following is a 172-amino-acid chain: MLSDKLKDKIGNYQDFPTTGILFRDITPILRDQKLFSELIEKMSESDILKKADCLVAIDARGFIFGSSIALNLSKPFILARKPGKLPGELIQSSYKLEYGENSLVFQLDSLKNFKSFGIIDDLLATGGTVNAVANLLNQKNKIITGLSVVVELTELNARSNFNFEVSSEVKY.

It belongs to the purine/pyrimidine phosphoribosyltransferase family. Homodimer.

It is found in the cytoplasm. It catalyses the reaction AMP + diphosphate = 5-phospho-alpha-D-ribose 1-diphosphate + adenine. Its pathway is purine metabolism; AMP biosynthesis via salvage pathway; AMP from adenine: step 1/1. In terms of biological role, catalyzes a salvage reaction resulting in the formation of AMP, that is energically less costly than de novo synthesis. The sequence is that of Adenine phosphoribosyltransferase from Prochlorococcus marinus (strain MIT 9215).